Consider the following 554-residue polypeptide: Arginine--tRNA ligase (554 aa).

The 'HIGH' region signature appears at 129–139 (ANPTGPLHIGH).

The protein belongs to the class-I aminoacyl-tRNA synthetase family. As to quaternary structure, monomer.

The protein resides in the cytoplasm. The enzyme catalyses tRNA(Arg) + L-arginine + ATP = L-arginyl-tRNA(Arg) + AMP + diphosphate. In Syntrophotalea carbinolica (strain DSM 2380 / NBRC 103641 / GraBd1) (Pelobacter carbinolicus), this protein is Arginine--tRNA ligase.